The chain runs to 433 residues: Glutamate--tRNA ligase 1 (433 aa).

The short motif at 7–17 (PSPTGLIHLGN) is the 'HIGH' region element. The short motif at 230-234 (KMSKR) is the 'KMSKS' region element. Lys233 contributes to the ATP binding site.

This sequence belongs to the class-I aminoacyl-tRNA synthetase family. Glutamate--tRNA ligase type 1 subfamily. As to quaternary structure, monomer.

It localises to the cytoplasm. The catalysed reaction is tRNA(Glu) + L-glutamate + ATP = L-glutamyl-tRNA(Glu) + AMP + diphosphate. Functionally, catalyzes the attachment of glutamate to tRNA(Glu) in a two-step reaction: glutamate is first activated by ATP to form Glu-AMP and then transferred to the acceptor end of tRNA(Glu). This Neorickettsia sennetsu (strain ATCC VR-367 / Miyayama) (Ehrlichia sennetsu) protein is Glutamate--tRNA ligase 1.